We begin with the raw amino-acid sequence, 96 residues long: DNA-directed RNA polymerase subunit Rpo11 (96 aa).

It belongs to the archaeal Rpo11/eukaryotic RPB11/RPC19 RNA polymerase subunit family. Part of the RNA polymerase complex.

It localises to the cytoplasm. The catalysed reaction is RNA(n) + a ribonucleoside 5'-triphosphate = RNA(n+1) + diphosphate. In terms of biological role, DNA-dependent RNA polymerase (RNAP) catalyzes the transcription of DNA into RNA using the four ribonucleoside triphosphates as substrates. In Methanococcus maripaludis (strain C6 / ATCC BAA-1332), this protein is DNA-directed RNA polymerase subunit Rpo11.